The sequence spans 214 residues: Adenylate kinase (214 aa).

10–15 (GAGKGT) contacts ATP. Positions 30–59 (STGDMLRAAVKAGTPLGLEAKKVMDAGQLV) are NMP. AMP-binding positions include T31, R36, 57-59 (QLV), 85-88 (GFPR), and Q92. The segment at 122–159 (GRRVHPGSGRVYHVVFNPPKVEGKDDVTGEDLVIRPDD) is LID. ATP is bound by residues R123 and 132–133 (VY). 2 residues coordinate AMP: R156 and R167. Q200 lines the ATP pocket.

The protein belongs to the adenylate kinase family. In terms of assembly, monomer.

The protein localises to the cytoplasm. The enzyme catalyses AMP + ATP = 2 ADP. It functions in the pathway purine metabolism; AMP biosynthesis via salvage pathway; AMP from ADP: step 1/1. Its function is as follows. Catalyzes the reversible transfer of the terminal phosphate group between ATP and AMP. Plays an important role in cellular energy homeostasis and in adenine nucleotide metabolism. In Shewanella amazonensis (strain ATCC BAA-1098 / SB2B), this protein is Adenylate kinase.